Here is a 451-residue protein sequence, read N- to C-terminus: Exodeoxyribonuclease 7 large subunit (451 aa).

It belongs to the XseA family. In terms of assembly, heterooligomer composed of large and small subunits.

It localises to the cytoplasm. It carries out the reaction Exonucleolytic cleavage in either 5'- to 3'- or 3'- to 5'-direction to yield nucleoside 5'-phosphates.. In terms of biological role, bidirectionally degrades single-stranded DNA into large acid-insoluble oligonucleotides, which are then degraded further into small acid-soluble oligonucleotides. The sequence is that of Exodeoxyribonuclease 7 large subunit from Neisseria meningitidis serogroup C / serotype 2a (strain ATCC 700532 / DSM 15464 / FAM18).